A 112-amino-acid chain; its full sequence is MYB-like transcription factor ETC2 (112 aa).

The region spanning 41–78 (TEQEEDLISRMYRLVGNRWDLIAGRVVGRKANEIERYW) is the Myb-like domain.

Interacts with GL3. In terms of tissue distribution, expressed in stomatal guard mother cells, young stomata and trichomes of young leaves, and inflorescences.

The protein resides in the nucleus. Functionally, MYB-type transcription factor involved in epidermal cell fate specification. Acts as a negative regulator of trichome development, by mediating lateral inhibition. Promotes the formation of hair developing cells in H position in root epidermis, probably by inhibiting non-hair cell formation. The polypeptide is MYB-like transcription factor ETC2 (ETC2) (Arabidopsis thaliana (Mouse-ear cress)).